A 138-amino-acid polypeptide reads, in one-letter code: uncharacterized protein (138 aa).

This is an uncharacterized protein from Acanthamoeba polyphaga (Amoeba).